A 222-amino-acid polypeptide reads, in one-letter code: CASP-like protein 1E1 (222 aa).

The Cytoplasmic segment spans residues 1 to 59; the sequence is MEASRVKPGFNGVGMAAGSVNGSSRRPGPGLGYGYGYYMGSGAAAGGSGRAAQAPVDGC. Residues 60 to 80 form a helical membrane-spanning segment; that stretch reads SVALRVFVVASTLVSAVVMGV. Residues 81 to 110 are Extracellular-facing; it reads DRQTRTIQITITDALPPLEVPLTANWSYSS. N-linked (GlcNAc...) asparagine glycosylation is present at Asn105. A helical membrane pass occupies residues 111–131; the sequence is AFVYFVVANAMVCLFSAAALA. Residues 132 to 146 lie on the Cytoplasmic side of the membrane; the sequence is ACRSRAAMVPVMVGD. Residues 147–167 form a helical membrane-spanning segment; that stretch reads LLALALLYSAVGAAAEFGILG. Over 168–189 the chain is Extracellular; that stretch reads ERGNSHVRWAKVCNVYGRFCDR. A helical membrane pass occupies residues 190–210; that stretch reads AMAAVIVSLIGAFANLVLLML. At 211–222 the chain is on the cytoplasmic side; sequence NILTIHKSSSYY.

The protein belongs to the Casparian strip membrane proteins (CASP) family. As to quaternary structure, homodimer and heterodimers.

Its subcellular location is the cell membrane. The sequence is that of CASP-like protein 1E1 from Sorghum bicolor (Sorghum).